We begin with the raw amino-acid sequence, 324 residues long: COP9 signalosome complex subunit 6 (324 aa).

The region spanning Val38 to Ile171 is the MPN domain.

This sequence belongs to the peptidase M67A family. CSN6 subfamily. In terms of assembly, component of the CSN complex, composed of COPS1/GPS1, COPS2, COPS3, COPS4, COPS5, COPS6, COPS7 (COPS7A or COPS7B), COPS8 and COPS9. In the complex, it probably interacts directly with COPS2, COPS4, COPS5, COPS7 (COPS7A or COPS7B) and COPS9. Interacts with the translation initiation factor EIF3S6. Interacts weakly with RBX1. Directly interacts with COP1 and 14-3-3 protein sigma/SFN. Interacts with ERCC6.

Its subcellular location is the cytoplasm. It is found in the nucleus. In terms of biological role, component of the COP9 signalosome complex (CSN), a complex involved in various cellular and developmental processes. The CSN complex is an essential regulator of the ubiquitin (Ubl) conjugation pathway by mediating the deneddylation of the cullin subunits of SCF-type E3 ligase complexes, leading to decrease the Ubl ligase activity of SCF-type complexes such as SCF, CSA or DDB2. The complex is also involved in phosphorylation of p53/TP53, c-jun/JUN, IkappaBalpha/NFKBIA, ITPK1 and IRF8, possibly via its association with CK2 and PKD kinases. CSN-dependent phosphorylation of TP53 and JUN promotes and protects degradation by the Ubl system, respectively. Has some glucocorticoid receptor-responsive activity. Stabilizes COP1 through reducing COP1 auto-ubiquitination and decelerating COP1 turnover rate, hence regulates the ubiquitination of COP1 targets, including SFN. This chain is COP9 signalosome complex subunit 6 (Cops6), found in Mus musculus (Mouse).